Here is a 97-residue protein sequence, read N- to C-terminus: Sm-like protein LSM3A (97 aa).

At Ser-2 the chain carries N-acetylserine. The Sm domain maps to 11 to 96; sequence EPLDLIRLSI…VILVSPPLRT (86 aa).

The protein belongs to the snRNP Sm proteins family. In terms of assembly, component of the heptameric LSM1-LSM7 complex that forms a seven-membered ring structure with a donut shape. The LSM subunits are arranged in the order LSM1, LSM2, LSM3, LSM6, LSM5, LSM7 and LSM4. Component of the heptameric LSM2-LSM8 complex that forms a seven-membered ring structure with a donut shape. The LSM subunits are arranged in the order LSM8, LSM2, LSM3, LSM6, LSM5, LSM7 and LSM4. LSM3A subunit interacts only with its two neighboring subunits, LSM2 and LSM6A or LSM6B. Expressed in roots, leaves, stems, flowers and siliques.

The protein resides in the cytoplasm. It localises to the nucleus. In terms of biological role, component of LSM protein complexes, which are involved in RNA processing. Component of the cytoplasmic LSM1-LSM7 complex which is involved in mRNA degradation by promoting decapping and leading to accurate 5'-3' mRNA decay. The cytoplasmic LSM1-LSM7 complex regulates developmental gene expression by the decapping of specific development-related transcripts. Component of the nuclear LSM2-LSM8 complex which is involved splicing nuclear mRNAs. LSM2-LSM8 binds directly to the U6 small nuclear RNAs (snRNAs) and is essential for accurate splicing of selected development-related mRNAs through the stabilization of the spliceosomal U6 snRNA. Plays a critical role in the regulation of development-related gene expression. The protein is Sm-like protein LSM3A of Arabidopsis thaliana (Mouse-ear cress).